The chain runs to 348 residues: Phosphate acyltransferase (348 aa).

Belongs to the PlsX family. In terms of assembly, homodimer. Probably interacts with PlsY.

The protein resides in the cytoplasm. It catalyses the reaction a fatty acyl-[ACP] + phosphate = an acyl phosphate + holo-[ACP]. The protein operates within lipid metabolism; phospholipid metabolism. Its function is as follows. Catalyzes the reversible formation of acyl-phosphate (acyl-PO(4)) from acyl-[acyl-carrier-protein] (acyl-ACP). This enzyme utilizes acyl-ACP as fatty acyl donor, but not acyl-CoA. The polypeptide is Phosphate acyltransferase (Leuconostoc citreum (strain KM20)).